The chain runs to 302 residues: Aspartate carbamoyltransferase catalytic subunit (302 aa).

Arginine 55 and threonine 56 together coordinate carbamoyl phosphate. Residue lysine 83 coordinates L-aspartate. 3 residues coordinate carbamoyl phosphate: arginine 105, histidine 133, and glutamine 136. L-aspartate is bound by residues arginine 166 and arginine 222. Carbamoyl phosphate is bound by residues glycine 262 and proline 263.

Belongs to the aspartate/ornithine carbamoyltransferase superfamily. ATCase family. Heterododecamer (2C3:3R2) of six catalytic PyrB chains organized as two trimers (C3), and six regulatory PyrI chains organized as three dimers (R2).

The catalysed reaction is carbamoyl phosphate + L-aspartate = N-carbamoyl-L-aspartate + phosphate + H(+). It participates in pyrimidine metabolism; UMP biosynthesis via de novo pathway; (S)-dihydroorotate from bicarbonate: step 2/3. Catalyzes the condensation of carbamoyl phosphate and aspartate to form carbamoyl aspartate and inorganic phosphate, the committed step in the de novo pyrimidine nucleotide biosynthesis pathway. The protein is Aspartate carbamoyltransferase catalytic subunit of Solibacter usitatus (strain Ellin6076).